The primary structure comprises 717 residues: Ubinuclein-2 (717 aa).

3 disordered regions span residues 114–136 (KDGS…TEDS), 166–308 (LERI…SAKS), and 620–717 (ADSS…NLPS). The span at 118-136 (DGEELDGAPDDDDYDTEDS) shows a compositional bias: acidic residues. Polar residues-rich tracts occupy residues 214–246 (QSAS…NGND) and 285–308 (SSKS…SAKS). Residues 623-632 (SFERSKQQHE) show a composition bias toward basic and acidic residues. The Nuclear localization signal motif lies at 634–641 (LKRTSSLS). Over residues 653–665 (KTEPALEETHLPA) the composition is skewed to basic and acidic residues. Over residues 675–705 (RQTHLKSKTHKQVQVHPQSKAHKQAQVHPKA) the composition is skewed to basic residues. Over residues 706–717 (KTQTPPDLNLPS) the composition is skewed to polar residues.

This sequence belongs to the ubinuclein family. In terms of assembly, component of the HIRA complex made of UBN1, UBN2, ASF1A, CABIN1 and HIRA. Interacts with HIRA.

It localises to the nucleus. Its subcellular location is the nucleolus. In terms of biological role, may be required for replication-independent chromatin assembly. This Arabidopsis thaliana (Mouse-ear cress) protein is Ubinuclein-2.